The primary structure comprises 303 residues: Beta-carotene 3-hydroxylase 2, chloroplastic (303 aa).

The N-terminal 52 residues, 1–52 (MAAGLSTIAVTLKPLNRSSFSANHPISTAVFPPSLRFNGFRRRKILTVCFVV), are a transit peptide targeting the chloroplast. 2 helical membrane-spanning segments follow: residues 96–116 (YLIA…MAVY) and 130–150 (VLEM…MEFW). The Fatty acid hydroxylase domain occupies 143 to 270 (AAVGMEFWAR…KFKGVPYGLF (128 aa)). The Histidine box-1 signature appears at 155 to 160 (HRALWH). The Histidine box-2 motif lies at 165–171 (NMHESHH). The next 2 membrane-spanning stretches (helical) occupy residues 180 to 200 (LNDV…YYGF) and 206 to 226 (VPGL…AYMF). The Histidine box-3 motif lies at 228–233 (HDGLVH). The Histidine box-4 signature appears at 254-258 (HQLHH).

This sequence belongs to the sterol desaturase family. In terms of assembly, homodimer. As to expression, expressed in leaves, flowers, stems, roots and siliques.

Its subcellular location is the plastid. It localises to the chloroplast membrane. The catalysed reaction is all-trans-beta-carotene + 4 reduced [2Fe-2S]-[ferredoxin] + 2 O2 + 4 H(+) = all-trans-zeaxanthin + 4 oxidized [2Fe-2S]-[ferredoxin] + 2 H2O. Its function is as follows. Nonheme diiron monooxygenase involved in the biosynthesis of xanthophylls. Specific for beta-ring hydroxylations of beta-carotene. Also has a low activity toward the beta- and epsilon-rings of alpha-carotene. No activity with acyclic carotenoids such as lycopene and neurosporene. Uses ferredoxin as an electron donor. This is Beta-carotene 3-hydroxylase 2, chloroplastic (BETA-OHASE 2) from Arabidopsis thaliana (Mouse-ear cress).